A 417-amino-acid chain; its full sequence is Odorant receptor Or1 (417 aa).

Residues 1-2 (MK) lie on the Cytoplasmic side of the membrane. A helical transmembrane segment spans residues 3–23 (LNKLNPRWDAYDRRDSFWLQL). Residues 24–45 (LCLKYLGLWPPEDTDQATRNRY) lie on the Extracellular side of the membrane. The helical transmembrane segment at 46–66 (IAYGWALRIMFLHLYALTQAL) threads the bilayer. The Cytoplasmic portion of the chain corresponds to 67 to 73 (YFKDVKD). Residues 74-94 (INDIANALFVLMTQVTLIYKL) form a helical membrane-spanning segment. The Extracellular portion of the chain corresponds to 95-133 (EKFNYNIARIQACLRKLNCTLYHPKQREEFSPVLQSMSG). Residue Asn112 is glycosylated (N-linked (GlcNAc...) asparagine). Residues 134 to 154 (VFWLMIFLMFVAIFTIIMWVM) traverse the membrane as a helical segment. The Cytoplasmic segment spans residues 155–178 (SPAFDNERRLPVPAWFPVDYHHSD). A helical membrane pass occupies residues 179-199 (IVYGVLFLYQTIGIVMSATYN). The Extracellular segment spans residues 200–284 (FSTDTMFSGL…ILSFGDEVQD (85 aa)). The helical transmembrane segment at 285 to 305 (IFQGSIFAQVCASVIIICMTL) threads the bilayer. The Cytoplasmic portion of the chain corresponds to 306–317 (LQATGDDVTMAD). A helical transmembrane segment spans residues 318–338 (LLGCGFYLLVMTSQVFIFCYV). Over 339-417 (GNEISYTTDK…LAVLQSMESE (79 aa)) the chain is Extracellular.

It belongs to the insect chemoreceptor superfamily. Heteromeric odorant receptor channel (TC 1.A.69) family. Or2a subfamily. As to expression, female-specific antennae and maxillary palp expression.

It localises to the cell membrane. Odorant receptor which plays a critical role in the anthropophilic host-seeking behavior; establishes the host preference to transmit malaria. May participate in the phenomenon of decreased host-seeking behavior in disease vector mosquitoes after blood feeding. The polypeptide is Odorant receptor Or1 (OR1) (Anopheles gambiae (African malaria mosquito)).